Consider the following 839-residue polypeptide: Protein translocase subunit SecA (839 aa).

ATP-binding positions include Q85, 103–107, and D493; that span reads GEGKT. The span at 780–790 shows a compositional bias: basic and acidic residues; sequence QIHEQERERAS. A disordered region spans residues 780–839; that stretch reads QIHEQERERASQRATTAAPQNIQSQQSANTDDLPKVERNEACPCGSGKKFKNCHGRKSFS. Polar residues predominate over residues 791 to 809; the sequence is QRATTAAPQNIQSQQSANT. Zn(2+) contacts are provided by C821, C823, C832, and H833. Residues 827 to 839 are compositionally biased toward basic residues; that stretch reads KKFKNCHGRKSFS.

It belongs to the SecA family. As to quaternary structure, monomer and homodimer. Part of the essential Sec protein translocation apparatus which comprises SecA, SecYEG and auxiliary proteins SecDF. Other proteins may also be involved. The cofactor is Zn(2+).

It localises to the cell membrane. Its subcellular location is the cytoplasm. It carries out the reaction ATP + H2O + cellular proteinSide 1 = ADP + phosphate + cellular proteinSide 2.. In terms of biological role, part of the Sec protein translocase complex. Interacts with the SecYEG preprotein conducting channel. Has a central role in coupling the hydrolysis of ATP to the transfer of proteins into and across the cell membrane, serving as an ATP-driven molecular motor driving the stepwise translocation of polypeptide chains across the membrane. This Streptococcus pyogenes serotype M28 (strain MGAS6180) protein is Protein translocase subunit SecA.